Reading from the N-terminus, the 338-residue chain is tRNA N6-adenosine threonylcarbamoyltransferase (338 aa).

Fe cation-binding residues include histidine 111 and histidine 115. Residues 134–138 (LLSGG), aspartate 167, glycine 180, and asparagine 275 contribute to the substrate site. Aspartate 304 contributes to the Fe cation binding site.

The protein belongs to the KAE1 / TsaD family. The cofactor is Fe(2+).

The protein resides in the cytoplasm. It catalyses the reaction L-threonylcarbamoyladenylate + adenosine(37) in tRNA = N(6)-L-threonylcarbamoyladenosine(37) in tRNA + AMP + H(+). Required for the formation of a threonylcarbamoyl group on adenosine at position 37 (t(6)A37) in tRNAs that read codons beginning with adenine. Is involved in the transfer of the threonylcarbamoyl moiety of threonylcarbamoyl-AMP (TC-AMP) to the N6 group of A37, together with TsaE and TsaB. TsaD likely plays a direct catalytic role in this reaction. This chain is tRNA N6-adenosine threonylcarbamoyltransferase, found in Leptospira borgpetersenii serovar Hardjo-bovis (strain JB197).